The chain runs to 321 residues: Malate dehydrogenase (321 aa).

NAD(+)-binding positions include 10–15 (GSGMIG) and Asp34. Positions 83 and 89 each coordinate substrate. NAD(+) contacts are provided by residues Asn96 and 119-121 (ITN). Substrate is bound by residues Asn121 and Arg152. His176 functions as the Proton acceptor in the catalytic mechanism.

This sequence belongs to the LDH/MDH superfamily. MDH type 3 family.

The catalysed reaction is (S)-malate + NAD(+) = oxaloacetate + NADH + H(+). Catalyzes the reversible oxidation of malate to oxaloacetate. The sequence is that of Malate dehydrogenase from Chelativorans sp. (strain BNC1).